The primary structure comprises 209 residues: 2,3-bisphosphoglycerate-dependent phosphoglycerate mutase (209 aa).

Residues 8 to 15 (RHGQSEGN), 21 to 22 (TG), R60, 87 to 90 (ERDY), K98, 114 to 115 (RR), and 158 to 159 (GN) contribute to the substrate site. Residue H9 is the Tele-phosphohistidine intermediate of the active site. Residue E87 is the Proton donor/acceptor of the active site.

It belongs to the phosphoglycerate mutase family. BPG-dependent PGAM subfamily. Homodimer.

It carries out the reaction (2R)-2-phosphoglycerate = (2R)-3-phosphoglycerate. It participates in carbohydrate degradation; glycolysis; pyruvate from D-glyceraldehyde 3-phosphate: step 3/5. In terms of biological role, catalyzes the interconversion of 2-phosphoglycerate and 3-phosphoglycerate. The protein is 2,3-bisphosphoglycerate-dependent phosphoglycerate mutase of Rhizobium etli (strain ATCC 51251 / DSM 11541 / JCM 21823 / NBRC 15573 / CFN 42).